Reading from the N-terminus, the 269-residue chain is Bidirectional sugar transporter SWEET1a (269 aa).

The Extracellular segment spans residues 1-6 (MEHIAR). The chain crosses the membrane as a helical span at residues 7 to 27 (FFFGVSGNVIALFLFLSPVVT). Residues 8–96 (FFGVSGNVIA…IFLIFAVDRR (89 aa)) form the MtN3/slv 1 domain. The Cytoplasmic segment spans residues 28–42 (FWRIIRKRSTEDFSG). Residues 43 to 63 (VPYNMTLLNCLLSAWYGLPFV) traverse the membrane as a helical segment. Topologically, residues 64-72 (SPNNILVST) are extracellular. The chain crosses the membrane as a helical span at residues 73 to 93 (INGTGSVIEAIYVVIFLIFAV). Residues 94-100 (DRRARLR) lie on the Cytoplasmic side of the membrane. Residues 101-121 (MLGLLSIVVSIFATVVLVSLL) form a helical membrane-spanning segment. Residues 122–129 (ALHGNARK) are Extracellular-facing. The helical transmembrane segment at 130–150 (VFCGLAATIFSICMYASPLSI) threads the bilayer. Residues 132–215 (CGLAATIFSI…ILYFIYRKNK (84 aa)) form the MtN3/slv 2 domain. Residues 151-164 (MRLVIKTKSVEYMP) lie on the Cytoplasmic side of the membrane. The chain crosses the membrane as a helical span at residues 165-185 (FLLSLAVFLCGTSWFIYGLLG). Topologically, residues 186–189 (RDPF) are extracellular. A helical transmembrane segment spans residues 190–210 (IIIPNGCGSFLGLVQLILYFI). At 211-269 (YRKNKGPAVPAGKGEAAAAADVEDAKKVAAAVEMADATTTNKAAADTVVGDGKVVASQV) the chain is on the cytoplasmic side.

Belongs to the SWEET sugar transporter family. In terms of assembly, forms homooligomers and/or heterooligomers.

It is found in the cell membrane. Its function is as follows. Mediates both low-affinity uptake and efflux of sugar across the plasma membrane. In Sorghum bicolor (Sorghum), this protein is Bidirectional sugar transporter SWEET1a.